We begin with the raw amino-acid sequence, 58 residues long: MMSRLSVFILIALVLSVIIDVLNNSKVEGACVENCRKYCQDKGARNGKCINSNCHCYY.

Positions methionine 1–glycine 29 are cleaved as a signal peptide. 3 disulfide bridges follow: cysteine 31-cysteine 49, cysteine 35-cysteine 54, and cysteine 39-cysteine 56.

The protein belongs to the short scorpion toxin superfamily. Potassium channel inhibitor family. Alpha-KTx 26 subfamily. Expressed by the venom gland.

It localises to the secreted. Recombinant toxin that reversibly blocks the voltage-gated potassium channels Shaker (IC(50)=0.054 nM), rKv1.2/KCNA2 (IC(50)=15.6 nM), and rKv1.3/KCNA3 (IC(50)=12.5 uM). The polypeptide is Mesomartoxin (Olivierus martensii (Manchurian scorpion)).